The primary structure comprises 370 residues: Quinolinate synthase (370 aa).

Iminosuccinate-binding residues include H62 and S83. C128 is a [4Fe-4S] cluster binding site. Iminosuccinate is bound by residues 154 to 156 and S171; that span reads YAN. C215 is a binding site for [4Fe-4S] cluster. Residues 241 to 243 and T258 contribute to the iminosuccinate site; that span reads HPE. C312 contacts [4Fe-4S] cluster.

The protein belongs to the quinolinate synthase family. Type 1 subfamily. It depends on [4Fe-4S] cluster as a cofactor.

It is found in the cytoplasm. The catalysed reaction is iminosuccinate + dihydroxyacetone phosphate = quinolinate + phosphate + 2 H2O + H(+). Its pathway is cofactor biosynthesis; NAD(+) biosynthesis; quinolinate from iminoaspartate: step 1/1. Its function is as follows. Catalyzes the condensation of iminoaspartate with dihydroxyacetone phosphate to form quinolinate. This chain is Quinolinate synthase, found in Neisseria gonorrhoeae (strain ATCC 700825 / FA 1090).